Consider the following 365-residue polypeptide: Phosphate acyltransferase (365 aa).

Belongs to the PlsX family. Homodimer. Probably interacts with PlsY.

It localises to the cytoplasm. The catalysed reaction is a fatty acyl-[ACP] + phosphate = an acyl phosphate + holo-[ACP]. The protein operates within lipid metabolism; phospholipid metabolism. Functionally, catalyzes the reversible formation of acyl-phosphate (acyl-PO(4)) from acyl-[acyl-carrier-protein] (acyl-ACP). This enzyme utilizes acyl-ACP as fatty acyl donor, but not acyl-CoA. The chain is Phosphate acyltransferase from Klebsiella pneumoniae (strain 342).